We begin with the raw amino-acid sequence, 148 residues long: Small ribosomal subunit protein uS7m (148 aa).

The protein belongs to the universal ribosomal protein uS7 family. As to quaternary structure, part of the small ribosomal subunit.

It localises to the mitochondrion. Functionally, one of the primary rRNA binding proteins, it binds directly to 18S rRNA where it nucleates assembly of the head domain of the small subunit. In Arabidopsis thaliana (Mouse-ear cress), this protein is Small ribosomal subunit protein uS7m (RPS7).